The chain runs to 153 residues: Coiled-coil-helix-coiled-coil-helix domain-containing protein 2 (153 aa).

Disordered regions lie at residues 1–51 (MPRG…AAPR) and 78–106 (HAIT…QGAQ). The span at 14–51 (PPASRAPQMRAAPRRAPAAQPPAAAAPSAVGSPAAAPR) shows a compositional bias: low complexity. The region spanning 113–153 (FGPCSLEIKQFLECAQNQSDVKLCEGFNEVLRQCRIANGLM) is the CHCH domain. Short sequence motifs (cx9C motif) lie at residues 116–126 (CSLEIKQFLEC) and 136–146 (CEGFNEVLRQC). Cystine bridges form between Cys116/Cys146 and Cys126/Cys136.

As to quaternary structure, interacts with RBPJ.

It localises to the nucleus. The protein localises to the mitochondrion. Its subcellular location is the mitochondrion intermembrane space. Transcription factor. Binds to the oxygen responsive element of COX4I2 and activates its transcription under hypoxia conditions (4% oxygen), as well as normoxia conditions (20% oxygen). The protein is Coiled-coil-helix-coiled-coil-helix domain-containing protein 2 (Chchd2) of Mus musculus (Mouse).